The chain runs to 406 residues: Phosphorylase b kinase gamma catalytic chain, liver/testis isoform (406 aa).

Positions Tyr-24–Phe-291 constitute a Protein kinase domain. ATP is bound by residues Ile-30–Val-38 and Lys-53. Asp-153 acts as the Proton acceptor in catalysis. The segment at Gln-306–Pro-330 is calmodulin-binding (domain-N). The calmodulin-binding (domain-C) stretch occupies residues Val-346 to Arg-370.

The protein belongs to the protein kinase superfamily. CAMK Ser/Thr protein kinase family. In terms of assembly, hexadecamer of 4 heterotetramers, each composed of alpha, beta, gamma, and delta subunits. Alpha (PHKA1 or PHKA2) and beta (PHKB) are regulatory subunits, gamma (PHKG1 or PHKG2) is the catalytic subunit, and delta is calmodulin.

It catalyses the reaction 2 ATP + phosphorylase b = 2 ADP + phosphorylase a.. In terms of biological role, catalytic subunit of the phosphorylase b kinase (PHK), which mediates the neural and hormonal regulation of glycogen breakdown (glycogenolysis) by phosphorylating and thereby activating glycogen phosphorylase. May regulate glycogeneolysis in the testis. In vitro, phosphorylates PYGM. The chain is Phosphorylase b kinase gamma catalytic chain, liver/testis isoform (Phkg2) from Rattus norvegicus (Rat).